The chain runs to 545 residues: Chaperonin GroEL (545 aa).

Residues Thr29–Pro32, Lys50, Asp86–Thr90, Gly413, and Asp495 each bind ATP.

Belongs to the chaperonin (HSP60) family. As to quaternary structure, forms a cylinder of 14 subunits composed of two heptameric rings stacked back-to-back. Interacts with the co-chaperonin GroES.

It is found in the cytoplasm. It carries out the reaction ATP + H2O + a folded polypeptide = ADP + phosphate + an unfolded polypeptide.. Together with its co-chaperonin GroES, plays an essential role in assisting protein folding. The GroEL-GroES system forms a nano-cage that allows encapsulation of the non-native substrate proteins and provides a physical environment optimized to promote and accelerate protein folding. The chain is Chaperonin GroEL from Borreliella afzelii (strain PKo) (Borrelia afzelii).